The following is a 579-amino-acid chain: Zinc finger protein 382 (579 aa).

The span at 1-12 shows a compositional bias: basic residues; sequence MGRPGRKPRGRA. Residues 1–37 form a disordered region; that stretch reads MGRPGRKPRGRARPGLFPFPKEELRQGGSSPANLNAM. A mediates interaction with TRIM28 region spans residues 12 to 135; that stretch reads ARPGLFPFPK…DKPPKSIVII (124 aa). Polar residues predominate over residues 27–36; the sequence is GGSSPANLNA. Represses transcription regions lie at residues 40–81 and 105–240; these read GPVS…FISV and IFPS…PEQR. Residues 42–113 enclose the KRAB domain; that stretch reads VSFKDVTVDF…RIFPSQSYLE (72 aa). The C2H2-type 1; degenerate zinc finger occupies 241 to 263; sequence FEYNKCDSSFLMTGVEFPHGRAH. 9 C2H2-type zinc fingers span residues 325 to 347, 353 to 375, 381 to 403, 409 to 431, 437 to 459, 465 to 487, 493 to 515, 521 to 543, and 549 to 571; these read FQCP…ERIH, YICC…EKTH, YLCV…HKAH, YECT…QRTH, YQCT…QRTH, YICS…QRIH, YICS…YRIH, NGCP…QKIH, and YECQ…QKTH. A required for transcriptional repression activity; probably mediates sequence-specific DNA-binding region spans residues 325-579; sequence FQCPYCGNSF…THKTETMRFQ (255 aa).

Belongs to the krueppel C2H2-type zinc-finger protein family. As to quaternary structure, interacts with TRIM28; enhances the transcriptional repressor activity.

The protein localises to the nucleus. Functions as a sequence-specific transcriptional repressor. The sequence is that of Zinc finger protein 382 (Znf382) from Mus musculus (Mouse).